The following is a 1361-amino-acid chain: DNA-directed RNA polymerase subunit beta (1361 aa).

This sequence belongs to the RNA polymerase beta chain family. As to quaternary structure, the RNAP catalytic core consists of 2 alpha, 1 beta, 1 beta' and 1 omega subunit. When a sigma factor is associated with the core the holoenzyme is formed, which can initiate transcription.

It carries out the reaction RNA(n) + a ribonucleoside 5'-triphosphate = RNA(n+1) + diphosphate. DNA-dependent RNA polymerase catalyzes the transcription of DNA into RNA using the four ribonucleoside triphosphates as substrates. The sequence is that of DNA-directed RNA polymerase subunit beta from Saccharophagus degradans (strain 2-40 / ATCC 43961 / DSM 17024).